Consider the following 364-residue polypeptide: B3 domain-containing protein At5g38490 (364 aa).

Residues 148–202 (ASTSSSSLLNLPCLEPSTETKDVPNPNYQSSSPSSCLTGKTNRKRRAVEQRKSGK) are disordered. The segment at residues 260-364 (FQKLIRNDFL…GVLCFALDTE (105 aa)) is a DNA-binding region (TF-B3).

It is found in the nucleus. The chain is B3 domain-containing protein At5g38490 from Arabidopsis thaliana (Mouse-ear cress).